Reading from the N-terminus, the 456-residue chain is Peripherin (456 aa).

A compositionally biased stretch (polar residues) spans 1–14 (MSHSGLRSTSTSYR). Residues 1–55 (MSHSGLRSTSTSYRRTLGSSPVPSSYSSSSRLSTSRHFGSPSPGPSSRSSSSAFR) form a disordered region. The tract at residues 1-90 (MSHSGLRSTS…FLTTRSNEKA (90 aa)) is head. Positions 16–55 (TLGSSPVPSSYSSSSRLSTSRHFGSPSPGPSSRSSSSAFR) are enriched in low complexity. Positions 88–397 (EKAELQELND…KLLEGEESRI (310 aa)) constitute an IF rod domain. Residues 91–123 (ELQELNDRFASFIEKVRYLEQQNAVLVTEINQA) form a coil 1A region. Residues 124 to 134 (RSKEPTRASDL) form a linker 1 region. The segment at 135–230 (CQQELRELRK…KLHEEELNDV (96 aa)) is coil 1B. The segment at 231–252 (QVSVQAQPVHMEIEAAKQPDLT) is linker 2. A coil 2 region spans residues 253-395 (SALRDIRSQY…YRKLLEGEES (143 aa)). Residues 396-456 (RIAVPIHSLT…RKEQSSEGEK (61 aa)) form a tail region. A disordered region spans residues 411–456 (SPAAPEIDPSTETHTRKTVAIKTIETRDGEQVVTESRKEQSSEGEK). Basic and acidic residues predominate over residues 434–456 (IETRDGEQVVTESRKEQSSEGEK).

Belongs to the intermediate filament family. Forms homodimers (in vitro). Homopolymerizes into a filamentous network (in vitro).

The protein localises to the cytoplasm. The protein resides in the cytoskeleton. Its subcellular location is the cell projection. It is found in the axon. It localises to the perikaryon. Its function is as follows. Class-III neuronal intermediate filament protein. My form an independent structural network without the involvement of other neurofilaments or may cooperate with other neuronal intermediate filament proteins to form a filamentous network. The chain is Peripherin (prph) from Xenopus laevis (African clawed frog).